Consider the following 246-residue polypeptide: Pyridoxine 5'-phosphate synthase (246 aa).

Asn12 contacts 3-amino-2-oxopropyl phosphate. 14 to 15 contacts 1-deoxy-D-xylulose 5-phosphate; the sequence is DH. Position 23 (Arg23) interacts with 3-amino-2-oxopropyl phosphate. Catalysis depends on His48, which acts as the Proton acceptor. Arg50 and His55 together coordinate 1-deoxy-D-xylulose 5-phosphate. Glu75 acts as the Proton acceptor in catalysis. Thr105 is a 1-deoxy-D-xylulose 5-phosphate binding site. His196 functions as the Proton donor in the catalytic mechanism. Residues Gly197 and 218 to 219 each bind 3-amino-2-oxopropyl phosphate; that span reads GH.

This sequence belongs to the PNP synthase family. Homooctamer; tetramer of dimers.

It is found in the cytoplasm. The enzyme catalyses 3-amino-2-oxopropyl phosphate + 1-deoxy-D-xylulose 5-phosphate = pyridoxine 5'-phosphate + phosphate + 2 H2O + H(+). The protein operates within cofactor biosynthesis; pyridoxine 5'-phosphate biosynthesis; pyridoxine 5'-phosphate from D-erythrose 4-phosphate: step 5/5. Its function is as follows. Catalyzes the complicated ring closure reaction between the two acyclic compounds 1-deoxy-D-xylulose-5-phosphate (DXP) and 3-amino-2-oxopropyl phosphate (1-amino-acetone-3-phosphate or AAP) to form pyridoxine 5'-phosphate (PNP) and inorganic phosphate. The sequence is that of Pyridoxine 5'-phosphate synthase from Thiobacillus denitrificans (strain ATCC 25259 / T1).